Here is a 246-residue protein sequence, read N- to C-terminus: Tyrosine recombinase XerD-like (246 aa).

Positions 1-72 (MINDINNFIE…AVNQFLFFLY (72 aa)) constitute a Core-binding (CB) domain. A Tyr recombinase domain is found at 84–246 (QETEKITLTQ…TPITLERYYR (163 aa)). Active-site residues include Lys149 and Arg212. The active-site O-(3'-phospho-DNA)-tyrosine intermediate is the Tyr244.

Belongs to the 'phage' integrase family. XerD-like subfamily.

It localises to the cytoplasm. Functionally, putative tyrosine recombinase. Not involved in the cutting and rejoining of the recombining DNA molecules on dif(SL) site. This chain is Tyrosine recombinase XerD-like, found in Streptococcus agalactiae serotype III (strain NEM316).